We begin with the raw amino-acid sequence, 119 residues long: Large ribosomal subunit protein uL18 (119 aa).

This sequence belongs to the universal ribosomal protein uL18 family. As to quaternary structure, part of the 50S ribosomal subunit; part of the 5S rRNA/L5/L18/L25 subcomplex. Contacts the 5S and 23S rRNAs.

Functionally, this is one of the proteins that bind and probably mediate the attachment of the 5S RNA into the large ribosomal subunit, where it forms part of the central protuberance. The chain is Large ribosomal subunit protein uL18 from Staphylococcus aureus (strain Mu3 / ATCC 700698).